The sequence spans 369 residues: Chorismate synthase (369 aa).

NADP(+)-binding residues include arginine 48 and arginine 54. Residues 125 to 127 (RSS), 238 to 239 (NA), glycine 283, 298 to 302 (KPTSS), and arginine 324 each bind FMN.

This sequence belongs to the chorismate synthase family. In terms of assembly, homotetramer. The cofactor is FMNH2.

It catalyses the reaction 5-O-(1-carboxyvinyl)-3-phosphoshikimate = chorismate + phosphate. It functions in the pathway metabolic intermediate biosynthesis; chorismate biosynthesis; chorismate from D-erythrose 4-phosphate and phosphoenolpyruvate: step 7/7. In terms of biological role, catalyzes the anti-1,4-elimination of the C-3 phosphate and the C-6 proR hydrogen from 5-enolpyruvylshikimate-3-phosphate (EPSP) to yield chorismate, which is the branch point compound that serves as the starting substrate for the three terminal pathways of aromatic amino acid biosynthesis. This reaction introduces a second double bond into the aromatic ring system. The protein is Chorismate synthase of Acidiphilium cryptum (strain JF-5).